The following is a 339-amino-acid chain: Ferrochelatase (339 aa).

Positions 202 and 283 each coordinate Fe cation.

This sequence belongs to the ferrochelatase family.

The protein resides in the cytoplasm. It catalyses the reaction heme b + 2 H(+) = protoporphyrin IX + Fe(2+). The protein operates within porphyrin-containing compound metabolism; protoheme biosynthesis; protoheme from protoporphyrin-IX: step 1/1. Functionally, catalyzes the ferrous insertion into protoporphyrin IX. In Psychrobacter sp. (strain PRwf-1), this protein is Ferrochelatase.